The sequence spans 249 residues: Triosephosphate isomerase (249 aa).

Residue 9-11 participates in substrate binding; it reads NWK. Residue His94 is the Electrophile of the active site. The active-site Proton acceptor is the Glu166. Residues Gly172, Ser211, and 232-233 contribute to the substrate site; that span reads GG.

Belongs to the triosephosphate isomerase family. Homodimer.

It is found in the cytoplasm. It carries out the reaction D-glyceraldehyde 3-phosphate = dihydroxyacetone phosphate. Its pathway is carbohydrate biosynthesis; gluconeogenesis. It participates in carbohydrate degradation; glycolysis; D-glyceraldehyde 3-phosphate from glycerone phosphate: step 1/1. Involved in the gluconeogenesis. Catalyzes stereospecifically the conversion of dihydroxyacetone phosphate (DHAP) to D-glyceraldehyde-3-phosphate (G3P). The polypeptide is Triosephosphate isomerase (Dechloromonas aromatica (strain RCB)).